The following is a 739-amino-acid chain: Phosphoribosylformylglycinamidine synthase subunit PurL (739 aa).

The active site involves H54. The ATP site is built by Y57 and K96. A Mg(2+)-binding site is contributed by E98. Residues S99–H102 and R121 each bind substrate. H100 (proton acceptor) is an active-site residue. A Mg(2+)-binding site is contributed by D122. A substrate-binding site is contributed by Q245. D275 is a binding site for Mg(2+). E319–Q321 is a substrate binding site. ATP-binding residues include D504 and G541. Residue N542 participates in Mg(2+) binding. Substrate is bound at residue S544.

The protein belongs to the FGAMS family. As to quaternary structure, monomer. Part of the FGAM synthase complex composed of 1 PurL, 1 PurQ and 2 PurS subunits.

The protein resides in the cytoplasm. The enzyme catalyses N(2)-formyl-N(1)-(5-phospho-beta-D-ribosyl)glycinamide + L-glutamine + ATP + H2O = 2-formamido-N(1)-(5-O-phospho-beta-D-ribosyl)acetamidine + L-glutamate + ADP + phosphate + H(+). It functions in the pathway purine metabolism; IMP biosynthesis via de novo pathway; 5-amino-1-(5-phospho-D-ribosyl)imidazole from N(2)-formyl-N(1)-(5-phospho-D-ribosyl)glycinamide: step 1/2. Functionally, part of the phosphoribosylformylglycinamidine synthase complex involved in the purines biosynthetic pathway. Catalyzes the ATP-dependent conversion of formylglycinamide ribonucleotide (FGAR) and glutamine to yield formylglycinamidine ribonucleotide (FGAM) and glutamate. The FGAM synthase complex is composed of three subunits. PurQ produces an ammonia molecule by converting glutamine to glutamate. PurL transfers the ammonia molecule to FGAR to form FGAM in an ATP-dependent manner. PurS interacts with PurQ and PurL and is thought to assist in the transfer of the ammonia molecule from PurQ to PurL. This Lactococcus lactis subsp. cremoris (strain SK11) protein is Phosphoribosylformylglycinamidine synthase subunit PurL.